The following is a 450-amino-acid chain: Probable glycosidase CRR1 (450 aa).

Positions 1-17 (MSKRIIQLILLSAFARA) are cleaved as a signal peptide. The region spanning 67–347 (SPESCVPVPA…WENAPDIKAH (281 aa)) is the GH16 domain. Glu225 (nucleophile) is an active-site residue. Glu229 serves as the catalytic Proton donor. A disordered region spans residues 428 to 450 (AQRQQHHRRSLPHVEAPPITNTM).

This sequence belongs to the glycosyl hydrolase 16 family. CRR1 subfamily.

Its subcellular location is the spore wall. In terms of biological role, spore specific glycosidase involved in spore wall assembly during sporulation. May be involved in copper import. In Eremothecium gossypii (strain ATCC 10895 / CBS 109.51 / FGSC 9923 / NRRL Y-1056) (Yeast), this protein is Probable glycosidase CRR1 (CRR1).